Reading from the N-terminus, the 119-residue chain is Ribonuclease P protein component (119 aa).

The tract at residues Met-1–Lys-20 is disordered.

The protein belongs to the RnpA family. In terms of assembly, consists of a catalytic RNA component (M1 or rnpB) and a protein subunit.

The enzyme catalyses Endonucleolytic cleavage of RNA, removing 5'-extranucleotides from tRNA precursor.. Functionally, RNaseP catalyzes the removal of the 5'-leader sequence from pre-tRNA to produce the mature 5'-terminus. It can also cleave other RNA substrates such as 4.5S RNA. The protein component plays an auxiliary but essential role in vivo by binding to the 5'-leader sequence and broadening the substrate specificity of the ribozyme. The chain is Ribonuclease P protein component from Mycolicibacterium vanbaalenii (strain DSM 7251 / JCM 13017 / BCRC 16820 / KCTC 9966 / NRRL B-24157 / PYR-1) (Mycobacterium vanbaalenii).